The sequence spans 351 residues: Homeobox-leucine zipper protein HOX23 (351 aa).

Positions 34 to 128 (LQDHAHGGHG…SFESGNKLEP (95 aa)) are disordered. Residues 56-65 (SPFLPDLAMD) are compositionally biased toward low complexity. Residues 101 to 160 (GGEKKRRLSVEQVRTLERSFESGNKLEPERKAQLARALGLQPRQVAIWFQNRRARWKTKQ) constitute a DNA-binding region (homeobox). Residues 114–128 (RTLERSFESGNKLEP) show a composition bias toward basic and acidic residues. The leucine-zipper stretch occupies residues 159-203 (KQLEKDFDALRRQLDAARAENDALLSLNSKLHAEIVALKGGAAAA). Positions 227–263 (EASCSNRSENSSEINLDISRPAPPPPPPPANESPVNR) are disordered. Positions 228 to 240 (ASCSNRSENSSEI) are enriched in polar residues. A compositionally biased stretch (pro residues) spans 247–257 (PAPPPPPPPAN).

This sequence belongs to the HD-ZIP homeobox family. Class I subfamily. Expressed in seedlings, roots, stems, leaf sheaths and panicles.

It localises to the nucleus. Functionally, probable transcription factor. This chain is Homeobox-leucine zipper protein HOX23 (HOX23), found in Oryza sativa subsp. indica (Rice).